A 431-amino-acid polypeptide reads, in one-letter code: Histidinol dehydrogenase (431 aa).

The NAD(+) site is built by Y129, Q191, and N214. Positions 237, 259, and 262 each coordinate substrate. 2 residues coordinate Zn(2+): Q259 and H262. Residues E327 and H328 each act as proton acceptor in the active site. Substrate-binding residues include H328, D361, E415, and H420. D361 lines the Zn(2+) pocket. H420 provides a ligand contact to Zn(2+).

The protein belongs to the histidinol dehydrogenase family. Zn(2+) is required as a cofactor.

It carries out the reaction L-histidinol + 2 NAD(+) + H2O = L-histidine + 2 NADH + 3 H(+). It participates in amino-acid biosynthesis; L-histidine biosynthesis; L-histidine from 5-phospho-alpha-D-ribose 1-diphosphate: step 9/9. Its function is as follows. Catalyzes the sequential NAD-dependent oxidations of L-histidinol to L-histidinaldehyde and then to L-histidine. This is Histidinol dehydrogenase (hisD) from Lactococcus lactis subsp. lactis (strain IL1403) (Streptococcus lactis).